The primary structure comprises 776 residues: Disintegrin and metalloproteinase domain-containing protein 28 (776 aa).

An N-terminal signal peptide occupies residues 1-19 (MLQALLTVSLLLSPVPVSA). The propeptide occupies 20 to 193 (IKELPGVKKY…IARPATRLVK (174 aa)). A Cysteine switch motif is present at residues 168 to 175 (STCGTDGV). A Zn(2+)-binding site is contributed by Cys-170. Residues 194-666 (LNDGKVQKHE…CDDSSVVFYF (473 aa)) lie on the Extracellular side of the membrane. Residues 204–400 (KYIEYYLVLD…KLSNCLFNAP (197 aa)) enclose the Peptidase M12B domain. Asn-268 and Asn-275 each carry an N-linked (GlcNAc...) asparagine glycan. Disulfide bonds link Cys-315–Cys-395, Cys-355–Cys-379, Cys-357–Cys-362, and Cys-466–Cys-486. Residue His-340 participates in Zn(2+) binding. Glu-341 is a catalytic residue. Zn(2+)-binding residues include His-344 and His-350. Asn-352 carries an N-linked (GlcNAc...) asparagine glycan. The 87-residue stretch at 408–494 (TPICGNQMVE…NCPDDRFRAN (87 aa)) folds into the Disintegrin domain. 3 N-linked (GlcNAc...) asparagine glycosylation sites follow: Asn-558, Asn-603, and Asn-629. The EGF-like domain occupies 626–658 (KSTNCSSKCKGHAVCDHELQCQCEEGWSPPDCD). 3 disulfides stabilise this stretch: Cys-630–Cys-640, Cys-634–Cys-646, and Cys-648–Cys-657. A helical transmembrane segment spans residues 667-687 (SIVVAVLFPVAVISLVVAIVI). The Cytoplasmic segment spans residues 688 to 776 (RQQSSREKQK…SSFLDSNPKA (89 aa)). Residues 691-701 (SSREKQKKDQR) are compositionally biased toward basic and acidic residues. Disordered stretches follow at residues 691 to 728 (SSRE…PQEM) and 746 to 776 (PASF…NPKA). Basic residues predominate over residues 709–718 (RPHKQKRKPQ).

It depends on Zn(2+) as a cofactor. Post-translationally, pro-domain removal and maturation may be, at least in part, autocatalytic. In terms of tissue distribution, expressed at high levels in epididymis and at lower levels in lung.

It is found in the membrane. In terms of biological role, may play a role in the adhesive and proteolytic events that occur during lymphocyte emigration or may function in ectodomain shedding of lymphocyte surface target proteins, such as FASL and CD40L. May be involved in sperm maturation. The polypeptide is Disintegrin and metalloproteinase domain-containing protein 28 (ADAM28) (Macaca fascicularis (Crab-eating macaque)).